Consider the following 2431-residue polypeptide: Histone-lysine N-methyltransferase trr (2431 aa).

4 disordered regions span residues 34-78 (LQKR…STAP), 135-201 (DADK…ENSG), 213-235 (ASGA…AGTP), and 759-789 (QSAN…TPMN). A compositionally biased stretch (polar residues) spans 142–165 (YRISTPRNSQSNPLLHRNTAFTSF). 3 stretches are compositionally biased toward low complexity: residues 171–183 (ASSS…STAS), 218–235 (SSTS…AGTP), and 767–787 (ATST…NATP). Residues 801–805 (LKQLL) carry the LXXLL motif 1 motif. 5 disordered regions span residues 863–895 (PVPT…GGSS), 918–973 (VGGE…QVKQ), 1226–1292 (HPQQ…AGGA), 1404–1433 (TSGG…KGGS), and 1478–1500 (GLVG…AEKM). Composition is skewed to low complexity over residues 866-895 (TATQ…GGSS), 952-970 (QQQQ…SPHQ), and 1226-1241 (HPQQ…QPQN). The segment covering 1269 to 1281 (RKRRKREVQKPRR) has biased composition (basic residues). Residues 1410–1422 (PASMSSAASAGSS) are compositionally biased toward low complexity. Residues 1423 to 1433 (SAGGGKLKGGS) show a composition bias toward gly residues. Threonine 1486 carries the post-translational modification Phosphothreonine. Phosphoserine occurs at positions 1488 and 1490. The LXXLL motif 2 signature appears at 1652–1656 (LANLL). Residues 1790 to 1836 (GGSAVKSSNGDSPGSFCASSTAPAEMVVKQEPEDEDEKTPSVPGNPT) form a disordered region. The span at 1794-1811 (VKSSNGDSPGSFCASSTA) shows a compositional bias: polar residues. The segment at 1895–1935 (TRQCVFCNQRGDGQADGPSRLLNFDVDKWVHLNCALWSNGV) adopts a C2HC pre-PHD-type zinc-finger fold. A PHD-type zinc finger spans residues 1956 to 2003 (QACSACHQPGATIKCFKSRCNSLYHLPCAIREECVFYKNKSVHCSVHG). The short motif at 2060–2064 (LSNLL) is the LXXLL motif 3 element. Residues 2061–2121 (SNLLRVGNMT…CRYICSIAEA (61 aa)) enclose the FYR N-terminal domain. The region spanning 2122 to 2209 (GCKPEFRIQV…ETLTDYRFKY (88 aa)) is the FYR C-terminal domain. Positions 2291–2407 (NNVYLARSKI…RGEELSYDYK (117 aa)) constitute an SET domain. Residues 2415–2431 (HKIPCACGAPNCRKWMN) enclose the Post-SET domain.

Belongs to the class V-like SAM-binding methyltransferase superfamily. Histone-lysine methyltransferase family. TRX/MLL subfamily. Component of the MLL3/4 complex composed at least of the catalytic subunit trr, ash2, Rbbp5, Dpy-30L1, wds, hcf, ptip, Pa1, Utx, Lpt and Ncoa6. Interacts with nuclear receptor EcR in an ecdysone-dependent manner. Interacts with ash2; the interaction stabilizes trr. As to expression, widely expressed.

The protein localises to the nucleus. It localises to the chromosome. It catalyses the reaction L-lysyl(4)-[histone H3] + 3 S-adenosyl-L-methionine = N(6),N(6),N(6)-trimethyl-L-lysyl(4)-[histone H3] + 3 S-adenosyl-L-homocysteine + 3 H(+). In terms of biological role, histone methyltransferase that acts as a coactivator for the ecdysone receptor during development. Specifically trimethylates 'Lys-4' of histone H3, a specific tag for epigenetic transcriptional activation. Recruited by EcR in an ecdysone-dependent manner causing H3 'Lys-4' trimethylation at ecdysone-inducible promoters, leading to activate expression. Plays a central role in the developing compound eye, during the progression of the morphogenetic furrow and in post-furrow differentiation of the retinal epithelium, notably by activating expression of hh. Also required for wing and abdominal development. In Drosophila melanogaster (Fruit fly), this protein is Histone-lysine N-methyltransferase trr (trr).